A 135-amino-acid polypeptide reads, in one-letter code: uncharacterized protein (135 aa).

This is an uncharacterized protein from Commelina yellow mottle virus (CoYMV).